The sequence spans 1004 residues: Receptor-type tyrosine-protein phosphatase N2 (1004 aa).

The N-terminal stretch at 1-27 (MGLPLPLLLLLLLPPPLPRALPAPASA) is a signal peptide. Residues 1–409 (MGLPLPLLLL…PEAPLLEKSS (409 aa)) form an involved in localization to secretory granules; interaction with CPE region. The Extracellular portion of the chain corresponds to 28-603 (RGRQLPGRLG…HPEEQEDSTK (576 aa)). Arg259 carries the omega-N-methylarginine modification. 3 disordered regions span residues 274–294 (APALSQRWPLPPGDSKDSLSM), 333–360 (QSDPVEGSQESHGRGAEGQLREQADAPE), and 393–459 (DHGS…WRLE). Residue Ser340 is modified to Phosphoserine. 2 stretches are compositionally biased toward basic and acidic residues: residues 341 to 356 (QESHGRGAEGQLREQA) and 407 to 418 (KSSRAEMKKSEQ). The segment covering 419–430 (PEEVLSSEEETA) has biased composition (acidic residues). Phosphoserine is present on residues Ser424 and Ser425. A compositionally biased stretch (basic and acidic residues) spans 431–450 (GVEHVKSRTYSKDLLERKPN). N-linked (GlcNAc...) asparagine glycosylation occurs at Asn553. The helical transmembrane segment at 604–624 (FIVLTFLSIACILAVLLASSL) threads the bilayer. Topologically, residues 625–1004 (AYCLRHNSHY…VNAILKALPQ (380 aa)) are cytoplasmic. The Tyrosine-based internalization motif signature appears at 655–664 (YQELCRQRMA). The segment at 665–710 (VRPQDHSEGPHTSRINSVSSQLSDGPMPSPSARSSTSSWSEEPAQS) is disordered. Residues 677-687 (SRINSVSSQLS) are compositionally biased toward polar residues. Ser681 is subject to Phosphoserine; by PKA. Ser687 is subject to Phosphoserine. Residues 694 to 710 (PSARSSTSSWSEEPAQS) are compositionally biased toward low complexity. The residue at position 700 (Thr700) is a Phosphothreonine; by PKA. Residues 734–994 (LEKEWEALCA…EFALTAVAEE (261 aa)) enclose the Tyrosine-protein phosphatase domain. Residues Asp902 and 934 to 940 (CSDGAGR) contribute to the substrate site. The Phosphocysteine intermediate role is filled by Cys934. Position 959 is an N6-acetyllysine (Lys959). Gln979 serves as a coordination point for substrate. Residues 993–999 (EEVNAIL) carry the Leucine-based sorting signal motif.

The protein belongs to the protein-tyrosine phosphatase family. Receptor class 8 subfamily. In terms of assembly, self-associates. Interacts (via cytoplasmic domain) with PTPRN (via cytoplasmic domain). Interacts (precursor form) with CPE. Interacts with HAP1. Interacts with AP2A1 or AP2A2 and AP1G1; indicative for an association with adaptor protein complex 2 (AP-2) and adaptor protein complex 1 (AP-1). Interacts with AP2M1; indicative for an association with adaptor protein complex 2 (AP-2). Interacts with MYO5A. Post-translationally, subject to proteolytic cleavage at multiple sites.

The protein resides in the cytoplasmic vesicle. The protein localises to the secretory vesicle membrane. It is found in the secretory vesicle. Its subcellular location is the synaptic vesicle membrane. The catalysed reaction is O-phospho-L-tyrosyl-[protein] + H2O = L-tyrosyl-[protein] + phosphate. In terms of biological role, plays a role in vesicle-mediated secretory processes. Required for normal accumulation of secretory vesicles in hippocampus, pituitary and pancreatic islets. Required for the accumulation of normal levels of insulin-containing vesicles and preventing their degradation. Plays a role in insulin secretion in response to glucose stimuli. Required for normal accumulation of the neurotransmitters norepinephrine, dopamine and serotonin in the brain. In females, but not in males, required for normal accumulation and secretion of pituitary hormones, such as luteinizing hormone (LH) and follicle-stimulating hormone (FSH). Required to maintain normal levels of renin expression and renin release. May regulate catalytic active protein-tyrosine phosphatases such as PTPRA through dimerization. Has phosphatidylinositol phosphatase activity; the PIPase activity is involved in its ability to regulate insulin secretion. Can dephosphorylate phosphatidylinositol 4,5-biphosphate, phosphatidylinositol 5-phosphate and phosphatidylinositol 3-phosphate. Regulates PI(4,5)P2 level in the plasma membrane and localization of cofilin at the plasma membrane and thus is indirectly involved in regulation of actin dynamics related to cell migration and metastasis; upon hydrolysis of PI(4,5)P2 cofilin is released from the plasma membrane and acts in the cytoplasm in severing F-actin filaments. The sequence is that of Receptor-type tyrosine-protein phosphatase N2 (Ptprn2) from Rattus norvegicus (Rat).